The chain runs to 159 residues: ATP synthase subunit b', chloroplastic (159 aa).

A helical membrane pass occupies residues 30-47 (LMALQFLALTIILNLIYY).

The protein belongs to the ATPase B chain family. F-type ATPases have 2 components, F(1) - the catalytic core - and F(0) - the membrane proton channel. F(1) has five subunits: alpha(3), beta(3), gamma(1), delta(1), epsilon(1). F(0) has four main subunits: a(1), b(1), b'(1) and c(10-14). The alpha and beta chains form an alternating ring which encloses part of the gamma chain. F(1) is attached to F(0) by a central stalk formed by the gamma and epsilon chains, while a peripheral stalk is formed by the delta, b and b' chains.

The protein localises to the plastid. Its subcellular location is the chloroplast thylakoid membrane. Functionally, f(1)F(0) ATP synthase produces ATP from ADP in the presence of a proton or sodium gradient. F-type ATPases consist of two structural domains, F(1) containing the extramembraneous catalytic core and F(0) containing the membrane proton channel, linked together by a central stalk and a peripheral stalk. During catalysis, ATP synthesis in the catalytic domain of F(1) is coupled via a rotary mechanism of the central stalk subunits to proton translocation. Component of the F(0) channel, it forms part of the peripheral stalk, linking F(1) to F(0). The b'-subunit is a diverged and duplicated form of b found in plants and photosynthetic bacteria. The polypeptide is ATP synthase subunit b', chloroplastic (Antithamnion sp. (Red alga)).